We begin with the raw amino-acid sequence, 87 residues long: uncharacterized protein (87 aa).

A signal peptide spans 1 to 22 (MKIKTTVAALSVLSVLSFGAFA).

The protein belongs to the BhsA/McbA family.

The protein localises to the periplasm. This is an uncharacterized protein from Escherichia coli O6:H1 (strain CFT073 / ATCC 700928 / UPEC).